The chain runs to 204 residues: Protease (204 aa).

Catalysis depends on residues His-53, Asp-70, and Cys-121.

The protein belongs to the peptidase C5 family. As to quaternary structure, interacts with protease cofactor pVI-C; this interaction is necessary for protease activation.

It localises to the virion. Its subcellular location is the host nucleus. It catalyses the reaction Cleaves proteins of the adenovirus and its host cell at two consensus sites: -Yaa-Xaa-Gly-Gly-|-Xaa- and -Yaa-Xaa-Gly-Xaa-|-Gly- (in which Yaa is Met, Ile or Leu, and Xaa is any amino acid).. With respect to regulation, requires DNA and protease cofactor for maximal activation. Inside nascent virions, becomes partially activated by binding to the viral DNA, allowing it to cleave the cofactor that binds to the protease and fully activates it. Actin, like the viral protease cofactor, seems to act as a cofactor in the cleavage of cytokeratin 18 and of actin itself. In terms of biological role, cleaves viral precursor proteins (pTP, pIIIa, pVI, pVII, pVIII, and pX) inside newly assembled particles giving rise to mature virions. Protease complexed to its cofactor slides along the viral DNA to specifically locate and cleave the viral precursors. Mature virions have a weakened organization compared to the unmature virions, thereby facilitating subsequent uncoating. Without maturation, the particle lacks infectivity and is unable to uncoat. Late in adenovirus infection, in the cytoplasm, may participate in the cytoskeleton destruction. Cleaves host cell cytoskeletal keratins K7 and K18. The polypeptide is Protease (Porcine adenovirus A serotype 3 (PAdV-3)).